The primary structure comprises 906 residues: uncharacterized protein (906 aa).

2 disordered regions span residues 231-322 (KEDA…PSTI) and 865-906 (AGAY…DEDE). The segment covering 236–250 (TTKQTTTTTTTTPQT) has biased composition (low complexity). The segment covering 264–281 (TPTPAPAPKPTTPKPTPA) has biased composition (pro residues). Over residues 302 to 314 (SVNNIPTPSDTNE) the composition is skewed to polar residues. The span at 867–906 (AYEDDDDDEGEGNEDDEDNDENEDEDEGEGEGDSSEDEDE) shows a compositional bias: acidic residues.

This is an uncharacterized protein from Dictyostelium sp. (strain GA11) (Slime mold).